A 404-amino-acid chain; its full sequence is N-acetylglucosamine-6-phosphate deacetylase (404 aa).

Residue Glu-143 participates in a divalent metal cation binding. Residue 154–155 (AH) participates in substrate binding. A divalent metal cation contacts are provided by His-211 and His-232. Substrate contacts are provided by residues 235 to 236 (NA), Arg-243, and 269 to 272 (DGIH). Asp-294 (proton donor/acceptor) is an active-site residue. A substrate-binding site is contributed by 328 to 330 (LSG).

This sequence belongs to the metallo-dependent hydrolases superfamily. NagA family. The cofactor is a divalent metal cation.

It carries out the reaction N-acetyl-D-glucosamine 6-phosphate + H2O = D-glucosamine 6-phosphate + acetate. The protein operates within amino-sugar metabolism; N-acetylneuraminate degradation. Functionally, hydrolyzes the N-glycolyl group from N-glycolylglucosamine 6-phosphate (GlcNGc-6-P) in the N-glycolylneuraminic acid (Neu5Gc) degradation pathway. This chain is N-acetylglucosamine-6-phosphate deacetylase (amdhd2), found in Danio rerio (Zebrafish).